The chain runs to 607 residues: MNIFTTSILLIFILLLSPILISMSNLIKHINFPLYTTTSIKFSFIISLLPLLMFFHNNMEYMITTWHWVTMNSMELKMSFKTDFFSILFTSVALFVTWSIMQFSSWYMHSDPNINRFIKYLTLFLITMLILTSANNMFQLFIGWEGVGIMSFLLIGWWYGRTDANTAALQAILYNRIGDIGFILAMVWFSLNMNSWELQQIMFSNNNDNLIPLMGLLIAATGKSAQFGLHPWLPSAMEGPTPVSALLHSSTMVVAGIFLLVRFHPLTTNNNFILTTMLCLGALTTLFTAICALTQNDIKKIIAFSTSSQLGLMMVTLGMNQPHLAFLHICTHAFFKAMLFMCSGSIIHSLADEQDIRKMGNITKIMPFTSSCLVIGSLALTGMPFLTGFYSKDLIIEAINTCNTNAWALLITLIATSMTAMYSMRIIYFVTMTKPRFPPLISINENDPDLMNPIKRLAFGSIFAGFVISYNIPPTSIPVLTMPWFLKTTALIISVLGFLIALELNNLTMKLSMNKANPYSSFSTLLGFFPSIIHRITPMKSLNLSLKTSLTLLDLIWLEKTIPKSTSTLHTNMTTLTTNQKGLIKLYFMSFLINIILIIILYSINLE.

16 helical membrane-spanning segments follow: residues 3 to 23, 35 to 55, 84 to 104, 117 to 137, 140 to 160, 171 to 191, 210 to 230, 241 to 261, 272 to 292, 301 to 320, 324 to 344, 365 to 385, 405 to 427, 457 to 477, 482 to 502, and 586 to 606; these read IFTT…LISM, YTTT…LMFF, FFSI…MQFS, FIKY…ANNM, LFIG…WWYG, AILY…WFSL, LIPL…FGLH, TPVS…FLLV, FILT…AICA, IIAF…LGMN, LAFL…MCSG, IMPF…GMPF, NAWA…MRII, LAFG…PTSI, MPWF…LIAL, and LYFM…SINL.

It belongs to the complex I subunit 5 family. In terms of assembly, core subunit of respiratory chain NADH dehydrogenase (Complex I) which is composed of 45 different subunits.

The protein resides in the mitochondrion inner membrane. The enzyme catalyses a ubiquinone + NADH + 5 H(+)(in) = a ubiquinol + NAD(+) + 4 H(+)(out). Its function is as follows. Core subunit of the mitochondrial membrane respiratory chain NADH dehydrogenase (Complex I) which catalyzes electron transfer from NADH through the respiratory chain, using ubiquinone as an electron acceptor. Essential for the catalytic activity and assembly of complex I. In Mus musculus (Mouse), this protein is NADH-ubiquinone oxidoreductase chain 5 (Mtnd5).